We begin with the raw amino-acid sequence, 281 residues long: MGIRKYKGTTNGRRNMNGYDFAEITKTTPEKSLLAPLKHTAGRNNAGKMTVRHRGGGTKRQYRIIDFKRIKDDVPATVKAIEYDPNRTANIALLGYADGTKSYILAPKGLKVGMTVQSGPDADIKVGNTLPLKNIPVGTVIHNIELKPGKGGQLTRSAGTSAQLLGKEEKYVLVRLSSGEVRMILAACRATIGSIGNDEHGLLVKGKAGRSRYAGQRPHVRGSVMNPNDHPHGGGEGKAPVGLPSPLSPWGKKTVGKKTRSHKARSNKFIVRGRKRGPHTR.

Residues 208 to 281 (AGRSRYAGQR…RGRKRGPHTR (74 aa)) form a disordered region. The span at 254–281 (TVGKKTRSHKARSNKFIVRGRKRGPHTR) shows a compositional bias: basic residues.

It belongs to the universal ribosomal protein uL2 family. Part of the 50S ribosomal subunit. Forms a bridge to the 30S subunit in the 70S ribosome.

Its function is as follows. One of the primary rRNA binding proteins. Required for association of the 30S and 50S subunits to form the 70S ribosome, for tRNA binding and peptide bond formation. It has been suggested to have peptidyltransferase activity; this is somewhat controversial. Makes several contacts with the 16S rRNA in the 70S ribosome. The polypeptide is Large ribosomal subunit protein uL2 (Limosilactobacillus fermentum (strain NBRC 3956 / LMG 18251) (Lactobacillus fermentum)).